The chain runs to 292 residues: tRNA pseudouridine synthase B (292 aa).

The active-site Nucleophile is D38.

It belongs to the pseudouridine synthase TruB family. Type 1 subfamily.

It catalyses the reaction uridine(55) in tRNA = pseudouridine(55) in tRNA. Its function is as follows. Responsible for synthesis of pseudouridine from uracil-55 in the psi GC loop of transfer RNAs. This Gloeobacter violaceus (strain ATCC 29082 / PCC 7421) protein is tRNA pseudouridine synthase B.